The following is a 228-amino-acid chain: Glycosylphosphatidylinositol-anchored high density lipoprotein-binding protein 1 (228 aa).

Residues 1-22 (MKALRAVLLILLLSGQPGSGWA) form the signal peptide. A disordered region spans residues 21–32 (WAQEDGDADPEP). The segment at 24 to 48 (EDGDADPEPENYNYDDDDDEEEEEE) is important for LPL transport to the lumenal surface of endothelial cells. A compositionally biased stretch (acidic residues) spans 24–49 (EDGDADPEPENYNYDDDDDEEEEEET). Y35 is modified (sulfotyrosine). The 88-residue stretch at 61 to 148 (LQCYFCQVLH…PWQNPQVQNP (88 aa)) folds into the UPAR/Ly6 domain. 5 disulfide bridges follow: C63–C88, C66–C75, C81–C109, C113–C129, and C130–C135. The N-linked (GlcNAc...) asparagine glycan is linked to N76. Residues 102 to 108 (LTTYSMW) form an important for interaction with LPL region. Residues 145 to 200 (VQNPLGGRADSPLESGTRHPQGGKFSHPQVVKAAHPQSDGANLPKSGKANQPQGSG) are disordered. G198 is lipidated: GPI-anchor amidated glycine. Residues 199 to 228 (SGAGYPSGWTKFGNIALLLSFFTCLWASGA) constitute a propeptide, removed in mature form.

As to quaternary structure, mostly monomer, but also homodimer and homooligomer. Interacts with lipoprotein lipase (LPL). Interacts with high affinity with high-density lipoprotein (HDL). Interacts with chylomicrons. Interacts with APOA5. In terms of processing, glycosylation of Asn-76 is critical for cell surface localization. Sulfation of a Tyr in the N-terminal acidic region increases the affinity for LPL. In terms of tissue distribution, detected in fat tissue. Detected on the luminal surface of capillary endothelial cells in heart, skeletal muscle and brown adipose tissue (at protein level). Detected in heart and brown adipose tissue. Expressed at lower levels in lung and liver.

The protein resides in the apical cell membrane. Its subcellular location is the basolateral cell membrane. It localises to the cell membrane. Its function is as follows. Mediates the transport of lipoprotein lipase LPL from the basolateral to the apical surface of endothelial cells in capillaries. Anchors LPL on the surface of endothelial cells in the lumen of blood capillaries. Thereby, plays an important role in lipolytic processing of chylomicrons by LPL, triglyceride metabolism and lipid homeostasis. Binds chylomicrons and phospholipid particles that contain APOA5. Binds high-density lipoprotein (HDL) and plays a role in the uptake of lipids from HDL. This chain is Glycosylphosphatidylinositol-anchored high density lipoprotein-binding protein 1, found in Mus musculus (Mouse).